A 358-amino-acid chain; its full sequence is Putative cell-type specific agglutination protein pfl7 (358 aa).

A signal peptide spans 1-23 (MNSLKSLCLKCIVTLCLLVNAFA). N-linked (GlcNAc...) asparagine glycosylation is found at Asn67, Asn88, Asn112, and Asn136. The tract at residues 90–144 (TISTSSSTPITASVPTSSSILSNSTIPTTSPVPTTSSTPTSSSILSNSTIPSSSS) is disordered. Repeat copies occupy residues 148 to 180 (STIT…IPTA) and 181 to 218 (GYIT…TPSC). The segment at 148–218 (STITTTIISG…GLVEVITPSC (71 aa)) is 2 X 36 AA approximate tandem repeats. A DIPSY domain is found at 207–358 (QSGLVEVITP…RADDVILVAY (152 aa)). N-linked (GlcNAc...) asparagine glycans are attached at residues Asn245 and Asn305.

This sequence belongs to the mam3/map4 family.

It localises to the cell surface. Its function is as follows. May be involved in agglutination during conjugation or other aspects of colony formation. Induces flocculation when overexpressed. The polypeptide is Putative cell-type specific agglutination protein pfl7 (Schizosaccharomyces pombe (strain 972 / ATCC 24843) (Fission yeast)).